A 290-amino-acid chain; its full sequence is DegV domain-containing protein MG450 (290 aa).

One can recognise a DegV domain in the interval 3-289 (IAFLVDSVSN…INSYAFLIQT (287 aa)). Hexadecanoate is bound by residues Thr65 and Ser97.

May bind long-chain fatty acids, such as palmitate, and may play a role in lipid transport or fatty acid metabolism. This Mycoplasma genitalium (strain ATCC 33530 / DSM 19775 / NCTC 10195 / G37) (Mycoplasmoides genitalium) protein is DegV domain-containing protein MG450.